Consider the following 230-residue polypeptide: Flagellar L-ring protein (230 aa).

The signal sequence occupies residues 1–16; sequence MYLVFGIIFTSVIVTS. The N-palmitoyl cysteine moiety is linked to residue cysteine 17. Residue cysteine 17 is the site of S-diacylglycerol cysteine attachment.

Belongs to the FlgH family. The basal body constitutes a major portion of the flagellar organelle and consists of four rings (L,P,S, and M) mounted on a central rod.

It is found in the cell outer membrane. The protein resides in the bacterial flagellum basal body. Assembles around the rod to form the L-ring and probably protects the motor/basal body from shearing forces during rotation. This is Flagellar L-ring protein from Bartonella bacilliformis (strain ATCC 35685 / KC583 / Herrer 020/F12,63).